A 57-amino-acid polypeptide reads, in one-letter code: UPF0337 protein SCO0678 (57 aa).

Composition is skewed to basic and acidic residues over residues 1 to 22 and 42 to 57; these read MAGNEKSRAKMEQAKGKAKEAA and GDARQAKEKGKDVFRH. The interval 1–57 is disordered; it reads MAGNEKSRAKMEQAKGKAKEAAGRAVGNERMTAEGRAAQSKGDARQAKEKGKDVFRH.

The protein belongs to the UPF0337 (CsbD) family.

The polypeptide is UPF0337 protein SCO0678 (Streptomyces coelicolor (strain ATCC BAA-471 / A3(2) / M145)).